A 216-amino-acid polypeptide reads, in one-letter code: uncharacterized protein (216 aa).

This is an uncharacterized protein from Escherichia coli (strain K12).